The chain runs to 118 residues: Ribosome-binding factor A (118 aa).

Belongs to the RbfA family. In terms of assembly, monomer. Binds 30S ribosomal subunits, but not 50S ribosomal subunits or 70S ribosomes.

The protein localises to the cytoplasm. Functionally, one of several proteins that assist in the late maturation steps of the functional core of the 30S ribosomal subunit. Associates with free 30S ribosomal subunits (but not with 30S subunits that are part of 70S ribosomes or polysomes). Required for efficient processing of 16S rRNA. May interact with the 5'-terminal helix region of 16S rRNA. In Bacillus cereus (strain B4264), this protein is Ribosome-binding factor A.